Here is a 228-residue protein sequence, read N- to C-terminus: UPF0173 metal-dependent hydrolase RBAM_026340 (228 aa).

Belongs to the UPF0173 family.

The polypeptide is UPF0173 metal-dependent hydrolase RBAM_026340 (Bacillus velezensis (strain DSM 23117 / BGSC 10A6 / LMG 26770 / FZB42) (Bacillus amyloliquefaciens subsp. plantarum)).